The chain runs to 735 residues: DNA replication licensing factor mcm5 (735 aa).

One can recognise an MCM domain in the interval 332–538; it reads IYETVAKSIA…RDMTLAKHVM (207 aa). Arginine 372 serves as a coordination point for ADP. Residues 513–516 carry the Arginine finger motif; that stretch reads SRFD.

This sequence belongs to the MCM family. In terms of assembly, component of the mcm2-7 complex (RLF-M). The complex forms a toroidal hexameric ring with the proposed subunit order mcm2-mcm6-mcm4-mcm7-mcm3-mcm5. The heterodimer of mmcm3/mcm5 interacts with mcm4, mmcm6, mcm7 and weakly with mcm2. Component of the CMG helicase complex, composed of the mcm2-7 complex, the GINS complex and cdc45.

The protein resides in the nucleus. The protein localises to the chromosome. The catalysed reaction is ATP + H2O = ADP + phosphate + H(+). Functionally, acts as a component of the MCM2-7 complex (MCM complex) which is the replicative helicase essential for 'once per cell cycle' DNA replication initiation and elongation in eukaryotic cells. Core component of CDC45-MCM-GINS (CMG) helicase, the molecular machine that unwinds template DNA during replication, and around which the replisome is built. The active ATPase sites in the MCM2-7 ring are formed through the interaction surfaces of two neighboring subunits such that a critical structure of a conserved arginine finger motif is provided in trans relative to the ATP-binding site of the Walker A box of the adjacent subunit. The six ATPase active sites, however, are likely to contribute differentially to the complex helicase activity. The polypeptide is DNA replication licensing factor mcm5 (Xenopus tropicalis (Western clawed frog)).